A 135-amino-acid chain; its full sequence is ATP synthase epsilon chain (135 aa).

Belongs to the ATPase epsilon chain family. As to quaternary structure, F-type ATPases have 2 components, CF(1) - the catalytic core - and CF(0) - the membrane proton channel. CF(1) has five subunits: alpha(3), beta(3), gamma(1), delta(1), epsilon(1). CF(0) has three main subunits: a, b and c.

Its subcellular location is the cell inner membrane. In terms of biological role, produces ATP from ADP in the presence of a proton gradient across the membrane. This chain is ATP synthase epsilon chain, found in Bradyrhizobium sp. (strain ORS 278).